Here is a 59-residue protein sequence, read N- to C-terminus: Large ribosomal subunit protein uL30 (59 aa).

Belongs to the universal ribosomal protein uL30 family. Part of the 50S ribosomal subunit.

This Citrobacter koseri (strain ATCC BAA-895 / CDC 4225-83 / SGSC4696) protein is Large ribosomal subunit protein uL30.